A 554-amino-acid chain; its full sequence is Calcium/calmodulin-dependent protein kinase type II delta 2 chain (554 aa).

A Protein kinase domain is found at Tyr13–Ile271. Residues Leu19–Val27 and Lys42 each bind ATP. The Proton acceptor role is filled by Asp135. Thr286 carries the phosphothreonine modification. 2 positions are modified to phosphoserine: Ser314 and Ser318. Disordered stretches follow at residues Pro324–Asp375 and Trp392–Gln413. The span at Asn330–Lys340 shows a compositional bias: polar residues. Phosphothreonine is present on Thr372.

Belongs to the protein kinase superfamily. CAMK Ser/Thr protein kinase family. CaMK subfamily. In terms of assembly, CAMK2 is composed of four different chains: alpha, beta, gamma, and delta. The different isoforms assemble into homo- or heteromultimeric holoenzymes composed of 8 to 12 subunits. As to expression, first detected at 18 hpf. At 24 hpf, expressed in discrete anterior locations and along either side of the midline. At 48 hpf, expression is predominantly in the forebrain, and then accumulates in the forebrain, hindbrain, and retinal epithelium at 72 hpf.

It catalyses the reaction L-seryl-[protein] + ATP = O-phospho-L-seryl-[protein] + ADP + H(+). It carries out the reaction L-threonyl-[protein] + ATP = O-phospho-L-threonyl-[protein] + ADP + H(+). Autophosphorylation of CAMK2 plays an important role in the regulation of the kinase activity. Functionally, caM-kinase II (CAMK2) is a prominent kinase in the central nervous system. This Danio rerio (Zebrafish) protein is Calcium/calmodulin-dependent protein kinase type II delta 2 chain (camk2d2).